Reading from the N-terminus, the 94-residue chain is Transcription factor CPC (94 aa).

An S1, required for cell-to-cell movements region spans residues 1 to 10 (MFRSDKAEKM). Residues 1-11 (MFRSDKAEKMD) show a composition bias toward basic and acidic residues. A disordered region spans residues 1 to 25 (MFRSDKAEKMDKRRRRQSKAKASCS). One can recognise a Myb-like domain in the interval 30-80 (SIEWEAVKMSEEEEDLISRMYKLVGDRWELIAGRIPGRTPEEIERYWLMKH). The interval 76–79 (WLMK) is S2, required for cell-to-cell movements and nuclear localization.

Interacts with GL3 and BHLH2. Interacts with SIEL. Expressed in trichomes and in young developing leaves, as well as in root hair and stele cells (pericycle and vascular tissues). Expressed in epidermal root hairless cells (atrichoblasts) and moves to root hair cells (trichoblasts) by a cell-to-cell movement through plasmodesmata (at protein level).

The protein resides in the nucleus. Transcription factor. Determines the fate of epidermal cell differentiation. Represses trichome development by lateral inhibition. Together with GL3 or BHLH2, promotes the formation of hair developing cells (H position) in root epidermis, probably by inhibiting non-hair cell formation. Represses the expression of GL2 and WER in H cells. Positively regulates stomatal formation in the hypocotyl. This Arabidopsis thaliana (Mouse-ear cress) protein is Transcription factor CPC (CPC).